The chain runs to 428 residues: Bifunctional IPC transferase and DIPP synthase (428 aa).

The segment at 2–227 (VETAVILAGG…KAKKYLVKTA (226 aa)) is mobA-like NTP transferase. CTP contacts are provided by residues 8–10 (LAG), Lys25, Glu80, and Glu116. Position 116 (Glu116) interacts with Mg(2+). The segment at 228-425 (IKGVGDGFIS…LTIYLVWKKK (198 aa)) is CDP-alcohol phosphatidyltransferases. 3 consecutive transmembrane segments (helical) span residues 266 to 286 (FLLG…GGIL), 336 to 356 (PSWD…MVSY), and 389 to 409 (MIMI…LAII).

It in the N-terminal section; belongs to the MobA family. The protein in the C-terminal section; belongs to the CDP-alcohol phosphatidyltransferase class-I family. It depends on Mg(2+) as a cofactor.

The protein localises to the membrane. The catalysed reaction is 1D-myo-inositol 3-phosphate + CTP + H(+) = CDP-1L-myo-inositol + diphosphate. It carries out the reaction CDP-1L-myo-inositol + 1D-myo-inositol 3-phosphate = bis(1L-myo-inositol) 3,1'-phosphate 1-phosphate + CMP + H(+). Involved in biosynthesis of di-myo-inositol phosphate (DIP), a widespread organic solute in microorganisms adapted to hot environments. Catalyzes the condensation of CTP and L-myo-inositol-1-phosphate into CDP-L-myo-inositol, as well as the biosynthesis of di-myo-inositol-1,3'-phosphate-1'-phosphate (DIPP) from CDP-L-myo-inositol and L-myo-inositol-1-phosphate. In Aquifex aeolicus (strain VF5), this protein is Bifunctional IPC transferase and DIPP synthase (spsI).